We begin with the raw amino-acid sequence, 312 residues long: MAWENQTFNSDFILLGIFNHSPTHTFLFFLVLAIFSVAFMGNSVMVLLIYLDTQLHTPMYFLLSQLFLMDLMLICSTVPKMAFNYLSGSKSISMAGCATQIFFYVSLLGSECFLLAVMSYDRYIAICHPLRYTNLMRPKICGLMTAFSWILGSMDAIIDAVATFSFSYCGSREIAHFFCDFPSLLILSCNDTSIFEKVLFICCIVMIVFPVAIIIASYARVILAVIHMGSGEGRRKAFTTCSSHLMVVGMYYGAGLFMYIRPTSDRSPMQDKLVSVFYTILTPMLNPLIYSLRNKEVTRALRKVLGKGKCGE.

The Extracellular segment spans residues 1–25; that stretch reads MAWENQTFNSDFILLGIFNHSPTHT. Residue asparagine 5 is glycosylated (N-linked (GlcNAc...) asparagine). Residues 26–49 form a helical membrane-spanning segment; the sequence is FLFFLVLAIFSVAFMGNSVMVLLI. Topologically, residues 50–57 are cytoplasmic; it reads YLDTQLHT. A helical transmembrane segment spans residues 58–79; the sequence is PMYFLLSQLFLMDLMLICSTVP. At 80-100 the chain is on the extracellular side; that stretch reads KMAFNYLSGSKSISMAGCATQ. Cysteine 97 and cysteine 189 are oxidised to a cystine. A helical membrane pass occupies residues 101–120; sequence IFFYVSLLGSECFLLAVMSY. The Cytoplasmic portion of the chain corresponds to 121–139; that stretch reads DRYIAICHPLRYTNLMRPK. A helical transmembrane segment spans residues 140-158; the sequence is ICGLMTAFSWILGSMDAII. Topologically, residues 159 to 195 are extracellular; sequence DAVATFSFSYCGSREIAHFFCDFPSLLILSCNDTSIF. Residues 196–219 form a helical membrane-spanning segment; sequence EKVLFICCIVMIVFPVAIIIASYA. Residues 220–236 lie on the Cytoplasmic side of the membrane; sequence RVILAVIHMGSGEGRRK. The helical transmembrane segment at 237–259 threads the bilayer; that stretch reads AFTTCSSHLMVVGMYYGAGLFMY. Topologically, residues 260–272 are extracellular; that stretch reads IRPTSDRSPMQDK. A helical membrane pass occupies residues 273 to 292; that stretch reads LVSVFYTILTPMLNPLIYSL. Residues 293 to 311 lie on the Cytoplasmic side of the membrane; the sequence is RNKEVTRALRKVLGKGKCG.

The protein belongs to the G-protein coupled receptor 1 family.

It localises to the cell membrane. Odorant receptor. This is Olfactory receptor 2M5 (OR2M5) from Homo sapiens (Human).